We begin with the raw amino-acid sequence, 265 residues long: Cytochrome c oxidase subunit 3 (265 aa).

The next 7 membrane-spanning stretches (helical) occupy residues 16–36, 41–61, 81–101, 137–157, 162–182, 200–220, and 245–265; these read PWPI…VMYM, GGAT…FVWW, GPRY…FAFF, TPIL…ILAG, AVYA…FQGM, FFLA…FLII, and WHFV…WGGI.

The protein belongs to the cytochrome c oxidase subunit 3 family. As to quaternary structure, component of the cytochrome c oxidase (complex IV, CIV), a multisubunit enzyme composed of a catalytic core of 3 subunits and several supernumerary subunits. The complex exists as a monomer or a dimer and forms supercomplexes (SCs) in the inner mitochondrial membrane with ubiquinol-cytochrome c oxidoreductase (cytochrome b-c1 complex, complex III, CIII).

The protein localises to the mitochondrion inner membrane. The enzyme catalyses 4 Fe(II)-[cytochrome c] + O2 + 8 H(+)(in) = 4 Fe(III)-[cytochrome c] + 2 H2O + 4 H(+)(out). Component of the cytochrome c oxidase, the last enzyme in the mitochondrial electron transport chain which drives oxidative phosphorylation. The respiratory chain contains 3 multisubunit complexes succinate dehydrogenase (complex II, CII), ubiquinol-cytochrome c oxidoreductase (cytochrome b-c1 complex, complex III, CIII) and cytochrome c oxidase (complex IV, CIV), that cooperate to transfer electrons derived from NADH and succinate to molecular oxygen, creating an electrochemical gradient over the inner membrane that drives transmembrane transport and the ATP synthase. Cytochrome c oxidase is the component of the respiratory chain that catalyzes the reduction of oxygen to water. Electrons originating from reduced cytochrome c in the intermembrane space (IMS) are transferred via the dinuclear copper A center (CU(A)) of subunit 2 and heme A of subunit 1 to the active site in subunit 1, a binuclear center (BNC) formed by heme A3 and copper B (CU(B)). The BNC reduces molecular oxygen to 2 water molecules using 4 electrons from cytochrome c in the IMS and 4 protons from the mitochondrial matrix. The sequence is that of Cytochrome c oxidase subunit 3 (COX3) from Vicia faba (Broad bean).